A 449-amino-acid polypeptide reads, in one-letter code: Na(+)/H(+) antiporter NhaA 1 (449 aa).

A run of 11 helical transmembrane segments spans residues 38–58, 79–99, 117–137, 145–165, 175–195, 198–218, 240–260, 311–331, 347–367, 390–410, and 422–442; these read GILL…PWAA, FTIR…VVGM, VLPL…YAAF, AGWA…LTLV, VFLT…IALF, SGLH…LACL, MHHG…FMPA, FVHL…ALAN, PLPL…IFLF, GVAV…GLAF, and LGIL…LRFV.

The protein belongs to the NhaA Na(+)/H(+) (TC 2.A.33) antiporter family.

Its subcellular location is the cell inner membrane. It carries out the reaction Na(+)(in) + 2 H(+)(out) = Na(+)(out) + 2 H(+)(in). Functionally, na(+)/H(+) antiporter that extrudes sodium in exchange for external protons. This chain is Na(+)/H(+) antiporter NhaA 1, found in Myxococcus xanthus (strain DK1622).